Reading from the N-terminus, the 85-residue chain is MAHKKAGGSTRNGRDSEAKRLGVKRFGGESVLAGSIIVRQRGTKFHAGANVGCGRDHTLFAKADGKVKFEVKGPKNRKFISIEAE.

The segment at 1-20 is disordered; it reads MAHKKAGGSTRNGRDSEAKR.

This sequence belongs to the bacterial ribosomal protein bL27 family.

The polypeptide is Large ribosomal subunit protein bL27 (Escherichia coli O139:H28 (strain E24377A / ETEC)).